The following is a 292-amino-acid chain: Cytochrome c1, heme protein, mitochondrial (292 aa).

The transit peptide at 1–46 directs the protein to the mitochondrion; sequence MFRSFSTAAKQAVKGTYVQRAIVGGAAVVGIGASTMLYADSLTADA. Topologically, residues 47–253 are mitochondrial intermembrane; it reads MTAAEHGLHA…SEPEHDERKR (207 aa). One can recognise a Cytochrome c domain in the interval 73–226; sequence SSIRRGYQVY…DLVEYEDGTP (154 aa). Cysteine 86, cysteine 89, and histidine 90 together coordinate heme c. The segment at 117–137 is disordered; sequence FEYDDEPDDQGNPKKRPGKLA. Methionine 210 contacts heme c. The helical transmembrane segment at 254–272 threads the bilayer; sequence LGLKAMIVLSSLYLLSVWV. At 273 to 292 the chain is on the mitochondrial matrix side; sequence KKFKWASIKSRKIVFNPPKK.

It belongs to the cytochrome c family. Component of the ubiquinol-cytochrome c oxidoreductase (cytochrome b-c1 complex, complex III, CIII), a multisubunit enzyme composed of 3 respiratory subunits cytochrome b, cytochrome c1 and Rieske protein, 2 core protein subunits, and additional low-molecular weight protein subunits. The complex exists as an obligatory dimer and forms supercomplexes (SCs) in the inner mitochondrial membrane with cytochrome c oxidase (complex IV, CIV). It depends on heme c as a cofactor.

Its subcellular location is the mitochondrion inner membrane. It carries out the reaction a quinol + 2 Fe(III)-[cytochrome c](out) = a quinone + 2 Fe(II)-[cytochrome c](out) + 2 H(+)(out). Its function is as follows. Component of the ubiquinol-cytochrome c oxidoreductase, a multisubunit transmembrane complex that is part of the mitochondrial electron transport chain which drives oxidative phosphorylation. The respiratory chain contains 3 multisubunit complexes succinate dehydrogenase (complex II, CII), ubiquinol-cytochrome c oxidoreductase (cytochrome b-c1 complex, complex III, CIII) and cytochrome c oxidase (complex IV, CIV), that cooperate to transfer electrons derived from NADH and succinate to molecular oxygen, creating an electrochemical gradient over the inner membrane that drives transmembrane transport and the ATP synthase. The cytochrome b-c1 complex catalyzes electron transfer from ubiquinol to cytochrome c, linking this redox reaction to translocation of protons across the mitochondrial inner membrane, with protons being carried across the membrane as hydrogens on the quinol. In the process called Q cycle, 2 protons are consumed from the matrix, 4 protons are released into the intermembrane space and 2 electrons are passed to cytochrome c. Cytochrome c1 is a catalytic core subunit containing a c-type heme. It transfers electrons from the [2Fe-2S] iron-sulfur cluster of the Rieske protein to cytochrome c. The protein is Cytochrome c1, heme protein, mitochondrial (CYT1) of Kluyveromyces lactis (strain ATCC 8585 / CBS 2359 / DSM 70799 / NBRC 1267 / NRRL Y-1140 / WM37) (Yeast).